The chain runs to 59 residues: Protein translocase subunit SecE (59 aa).

A helical membrane pass occupies residues 33–53; the sequence is GAGIALVGLLGFIIFAVMTFV.

This sequence belongs to the SecE/SEC61-gamma family. As to quaternary structure, component of the Sec protein translocase complex. Heterotrimer consisting of SecY (alpha), SecG (beta) and SecE (gamma) subunits. The heterotrimers can form oligomers, although 1 heterotrimer is thought to be able to translocate proteins. Interacts with the ribosome. May interact with SecDF, and other proteins may be involved.

The protein resides in the cell membrane. Its function is as follows. Essential subunit of the Sec protein translocation channel SecYEG. Clamps together the 2 halves of SecY. May contact the channel plug during translocation. The chain is Protein translocase subunit SecE from Haloarcula marismortui (strain ATCC 43049 / DSM 3752 / JCM 8966 / VKM B-1809) (Halobacterium marismortui).